A 933-amino-acid polypeptide reads, in one-letter code: Neuronal PAS domain-containing protein 4A (933 aa).

The basic motif; degenerate stretch occupies residues 1-13; that stretch reads MYRSTKGASKARR. The bHLH domain occupies 1–53; it reads MYRSTKGASKARRDQINAEIRNLKDLLPISDADKSRLSYLHIMSLACMYTRKS. The tract at residues 14–53 is helix-loop-helix motif; that stretch reads DQINAEIRNLKDLLPISDADKSRLSYLHIMSLACMYTRKS. 2 consecutive PAS domains span residues 74-148 and 220-290; these read SFYE…PDTD and TSAS…LREG. Residues 295–334 enclose the PAC domain; it reads AEMVVRVETADHSWVWLYMVLQLETGETPIVSNNYIISET. The span at 361–398 shows a compositional bias: polar residues; it reads QESVSLQSPETLSSPDQVFTPGSSGLSGQSFDFSTAAC. Disordered regions lie at residues 361–451, 514–573, and 750–776; these read QESV…ASSP, GSNF…LSSL, and DLSS…PSTP. Composition is skewed to low complexity over residues 399 to 411, 440 to 451, 538 to 560, and 751 to 769; these read STGS…GSSS, EPMASPSSASSP, GQTA…SNPQ, and LSSS…HSSP.

As to quaternary structure, efficient DNA binding requires dimerization with another bHLH protein. As to expression, brain-specific.

The protein localises to the nucleus. Functionally, transcription factor expressed in neurons of the brain that regulates the excitatory-inhibitory balance within neural circuits and is required for contextual memory in the hippocampus. Plays a key role in the structural and functional plasticity of neurons. Acts as an early-response transcription factor in both excitatory and inhibitory neurons, where it induces distinct but overlapping sets of late-response genes in these two types of neurons, allowing the synapses that form on inhibitory and excitatory neurons to be modified by neuronal activity in a manner specific to their function within a circuit, thereby facilitating appropriate circuit responses to sensory experience. This chain is Neuronal PAS domain-containing protein 4A (npas4a), found in Danio rerio (Zebrafish).